A 145-amino-acid chain; its full sequence is 3-hydroxyacyl-[acyl-carrier-protein] dehydratase FabZ (145 aa).

His-51 is a catalytic residue.

It belongs to the thioester dehydratase family. FabZ subfamily.

The protein localises to the cytoplasm. It carries out the reaction a (3R)-hydroxyacyl-[ACP] = a (2E)-enoyl-[ACP] + H2O. In terms of biological role, involved in unsaturated fatty acids biosynthesis. Catalyzes the dehydration of short chain beta-hydroxyacyl-ACPs and long chain saturated and unsaturated beta-hydroxyacyl-ACPs. This chain is 3-hydroxyacyl-[acyl-carrier-protein] dehydratase FabZ, found in Staphylococcus saprophyticus subsp. saprophyticus (strain ATCC 15305 / DSM 20229 / NCIMB 8711 / NCTC 7292 / S-41).